The following is a 326-amino-acid chain: Malate dehydrogenase (326 aa).

12–18 (GGTGQIA) serves as a coordination point for NAD(+). Substrate is bound by residues Arg-93 and Arg-99. NAD(+)-binding positions include Asn-106, Gln-113, and 130 to 132 (VGN). 2 residues coordinate substrate: Asn-132 and Arg-163. His-188 acts as the Proton acceptor in catalysis.

Belongs to the LDH/MDH superfamily. MDH type 2 family.

The catalysed reaction is (S)-malate + NAD(+) = oxaloacetate + NADH + H(+). Functionally, catalyzes the reversible oxidation of malate to oxaloacetate. The chain is Malate dehydrogenase from Chlamydia trachomatis serovar A (strain ATCC VR-571B / DSM 19440 / HAR-13).